The following is a 269-amino-acid chain: 4-hydroxy-tetrahydrodipicolinate reductase (269 aa).

Residues 11–16 (GGSGRM) and E37 each bind NAD(+). Residue R38 participates in NADP(+) binding. NAD(+) contacts are provided by residues 101-103 (GTT) and 125-128 (AGNM). The active-site Proton donor/acceptor is H158. H159 provides a ligand contact to (S)-2,3,4,5-tetrahydrodipicolinate. The active-site Proton donor is K162. 168–169 (GT) provides a ligand contact to (S)-2,3,4,5-tetrahydrodipicolinate.

The protein belongs to the DapB family.

The protein resides in the cytoplasm. It carries out the reaction (S)-2,3,4,5-tetrahydrodipicolinate + NAD(+) + H2O = (2S,4S)-4-hydroxy-2,3,4,5-tetrahydrodipicolinate + NADH + H(+). The enzyme catalyses (S)-2,3,4,5-tetrahydrodipicolinate + NADP(+) + H2O = (2S,4S)-4-hydroxy-2,3,4,5-tetrahydrodipicolinate + NADPH + H(+). The protein operates within amino-acid biosynthesis; L-lysine biosynthesis via DAP pathway; (S)-tetrahydrodipicolinate from L-aspartate: step 4/4. Its function is as follows. Catalyzes the conversion of 4-hydroxy-tetrahydrodipicolinate (HTPA) to tetrahydrodipicolinate. This chain is 4-hydroxy-tetrahydrodipicolinate reductase, found in Dinoroseobacter shibae (strain DSM 16493 / NCIMB 14021 / DFL 12).